We begin with the raw amino-acid sequence, 200 residues long: Small ribosomal subunit protein uS4 (200 aa).

Residues 22–43 (TGKELERRPYAPGQHGPTQRKK) are disordered. The region spanning 92-170 (QRLDNIVYRL…VPEYVTFDAE (79 aa)) is the S4 RNA-binding domain.

It belongs to the universal ribosomal protein uS4 family. Part of the 30S ribosomal subunit. Contacts protein S5. The interaction surface between S4 and S5 is involved in control of translational fidelity.

Its function is as follows. One of the primary rRNA binding proteins, it binds directly to 16S rRNA where it nucleates assembly of the body of the 30S subunit. Functionally, with S5 and S12 plays an important role in translational accuracy. In Listeria innocua serovar 6a (strain ATCC BAA-680 / CLIP 11262), this protein is Small ribosomal subunit protein uS4.